A 361-amino-acid chain; its full sequence is Probable mannose-1-phosphate guanylyltransferase 3 (361 aa).

GDP-alpha-D-mannose-binding residues include Leu-6 and Val-7. The diphosphate site is built by Gly-9, Gly-11, Thr-12, Arg-13, and Lys-23. Positions 85, 109, 111, 146, and 173 each coordinate GDP-alpha-D-mannose.

Belongs to the transferase hexapeptide repeat family.

It carries out the reaction alpha-D-mannose 1-phosphate + GTP + H(+) = GDP-alpha-D-mannose + diphosphate. It participates in nucleotide-sugar biosynthesis; GDP-alpha-D-mannose biosynthesis; GDP-alpha-D-mannose from alpha-D-mannose 1-phosphate (GTP route): step 1/1. Its function is as follows. Catalyzes a reaction of the Smirnoff-Wheeler pathway, the major route to ascorbate biosynthesis in plants. In Oryza sativa subsp. japonica (Rice), this protein is Probable mannose-1-phosphate guanylyltransferase 3.